Reading from the N-terminus, the 35-residue chain is U1-segestritoxin-Sf1a (35 aa).

Cystine bridges form between cysteine 10–cysteine 22 and cysteine 17–cysteine 28. A keys region for toxin activity region spans residues 31-33; that stretch reads DPW.

It belongs to the neurotoxin 16 (SFI) family. As to expression, expressed by the venom gland.

The protein localises to the secreted. Insecticidal toxin. This is U1-segestritoxin-Sf1a from Segestria florentina (Tube-web spider).